The primary structure comprises 189 residues: UPF0301 protein PP_4995 (189 aa).

Belongs to the UPF0301 (AlgH) family.

This chain is UPF0301 protein PP_4995, found in Pseudomonas putida (strain ATCC 47054 / DSM 6125 / CFBP 8728 / NCIMB 11950 / KT2440).